Consider the following 773-residue polypeptide: Disintegrin and metalloproteinase domain-containing protein 11 (773 aa).

A signal peptide spans 1-24; the sequence is MRRLRRWAIAALLLLPLLPPPGLG. The propeptide occupies 25–229; sequence ALGPRGALHW…PNWPKLRRKR (205 aa). Residues 36–82 form a disordered region; that stretch reads SSAHVGSPESPEGSEVTEPSRLVRQSSGGEVRKPQLDTRVRQDPPRG. The segment covering 65–79 has biased composition (basic and acidic residues); it reads EVRKPQLDTRVRQDP. N100 and N167 each carry an N-linked (GlcNAc...) asparagine glycan. Topologically, residues 230–738 are extracellular; sequence QVRRGHPTVH…ERYKGPSGTN (509 aa). Positions 243–442 constitute a Peptidase M12B domain; the sequence is KYVELIVIND…GGGSCLFNKP (200 aa). The interval 336-773 is required for localization to cerebellar cortex basket cell terminals. Also required for localization of KCNA1, KCNA2, DLG4 and ADAM22 to cerebellar cortex basket cell terminal perisomatic axons and pinceaux; the sequence is GRTFQSTSSG…NIRRGRSGGA (438 aa). Intrachain disulfides connect C353–C437, C396–C421, C398–C405, and C507–C527. In terms of domain architecture, Disintegrin spans 448 to 535; it reads PPECGNGFVE…QCPPNLHKLD (88 aa). N-linked (GlcNAc...) asparagine glycosylation is found at N609 and N677. 3 disulfide bridges follow: C681–C696, C690–C702, and C704–C713. The EGF-like domain occupies 681–713; sequence CPGSGERRICSHHGVCSNEGKCICQPDWTGKDC. The chain crosses the membrane as a helical span at residues 739-759; it reads IIIGSIAGAVLVAAIVLGGTG. Residues 760 to 773 lie on the Cytoplasmic side of the membrane; that stretch reads WGFKNIRRGRSGGA.

Interacts with LGI1 and LGI4. Interacts with KCNA1/KV1.1, KCNA2/KV1.2, DLG4/PSD-95 and ADAM22. In terms of processing, the precursor is cleaved by a furin endopeptidase. As to expression, abundantly expressed in cerebellar cortex basket cell terminals and pinceaux, weakly expressed in Purkinje cells (at protein level). Weakly expressed in the heart. Abundantly in expressed in neurons throughout the central nervous system including the telencephalon, diencephalic and brainstem nuclei, cerebellum and spinal cord. Expressed in the peripheral nervous system trigeminal and dorsal root ganglia. Expressed in the ganglion and bipolar cells of the retinae and weakly in the cornea of the eyes. Expressed in the hepatocytes of the parenchyma and hepatic lobules of the liver. Expressed in distinct focal areas in the juxtamedullary cortex of the kidney. Expressed in spermatocytes in the seminiferous tubules of the testes. Expressed in the stratum spinosum of the stratified squamous epithelia of the tongue and esophagus.

The protein localises to the presynaptic cell membrane. It localises to the perikaryon. The protein resides in the cell projection. It is found in the axon. Functionally, probable ligand for integrin in the brain. This is a non catalytic metalloprotease-like protein. Required for localization of the potassium channel subunit proteins KCNA1/KV1.1 and KCNA2/KV1.2 at cerebellar cortex basket cell distal terminals, is thereby involved in ephaptic inhibitory synchronization of Purkinje cell firing and response to stress. Plays a role in spatial learning and motor coordination. Involved in the nociceptive pain response to chemical-derived stimulation. In Mus musculus (Mouse), this protein is Disintegrin and metalloproteinase domain-containing protein 11 (Adam11).